Consider the following 125-residue polypeptide: Small ribosomal subunit protein uS13 (125 aa).

Residues 92 to 125 (RRSLPARGQRTRTNARTRKGKRKTVAGKKKAGKK) are disordered.

It belongs to the universal ribosomal protein uS13 family. Part of the 30S ribosomal subunit. Forms a loose heterodimer with protein S19. Forms two bridges to the 50S subunit in the 70S ribosome.

Functionally, located at the top of the head of the 30S subunit, it contacts several helices of the 16S rRNA. In the 70S ribosome it contacts the 23S rRNA (bridge B1a) and protein L5 of the 50S subunit (bridge B1b), connecting the 2 subunits; these bridges are implicated in subunit movement. Contacts the tRNAs in the A and P-sites. In Chlorobaculum parvum (strain DSM 263 / NCIMB 8327) (Chlorobium vibrioforme subsp. thiosulfatophilum), this protein is Small ribosomal subunit protein uS13.